Reading from the N-terminus, the 464-residue chain is MGRDIPDNETWWYNPTMEVHPHWKQFNQVPDAVYYSLGIFIGICGIIGCTGNGIVIYLFTKTKSLQTPANMFIINLAFSDFTFSLVNGFPLMTISCFIKKWVFGMAACKVYGFIGGIFGLMSIMTMSMISIDRYNVIGRPMAASKKMSHRRAFLMIIFVWMWSTLWSIGPIFGWGAYVLEGVLCNCSFDYITRDSATRSNIVCMYIFAFCFPILIIFFCYFNIVMAVSNHEKEMAAMAKRLNAKELRKAQAGASAEMKLAKISIVIVTQFLLSWSPYAVVALLAQFGPIEWVTPYAAQLPVMFAKASAIHNPLIYSVSHPKFREAIAENFPWIITCCQFDEKEVEDDKDAETEIPATEQSGGESADAAQMKEMMAMMQKMQQQQAAYPPQGAYPPQGGYPPQGYPPPPAQGGYPPQGYPPPPQGYPPAQGYPPQGYPPPQGAPPQGAPPQAAPPQGVDNQAYQA.

Residues 1 to 33 lie on the Extracellular side of the membrane; that stretch reads MGRDIPDNETWWYNPTMEVHPHWKQFNQVPDAV. An N-linked (GlcNAc...) asparagine glycan is attached at Asn-8. The helical transmembrane segment at 34 to 58 threads the bilayer; sequence YYSLGIFIGICGIIGCTGNGIVIYL. Over 59–70 the chain is Cytoplasmic; sequence FTKTKSLQTPAN. Residues 71–97 form a helical membrane-spanning segment; sequence MFIINLAFSDFTFSLVNGFPLMTISCF. At 98–109 the chain is on the extracellular side; it reads IKKWVFGMAACK. An intrachain disulfide couples Cys-108 to Cys-186. The helical transmembrane segment at 110 to 131 threads the bilayer; sequence VYGFIGGIFGLMSIMTMSMISI. Residues 132 to 134 carry the 'Ionic lock' involved in activated form stabilization motif; that stretch reads DRY. Residues 132–151 lie on the Cytoplasmic side of the membrane; the sequence is DRYNVIGRPMAASKKMSHRR. Residues 152-172 traverse the membrane as a helical segment; the sequence is AFLMIIFVWMWSTLWSIGPIF. Over 173 to 199 the chain is Extracellular; it reads GWGAYVLEGVLCNCSFDYITRDSATRS. The chain crosses the membrane as a helical span at residues 200–224; sequence NIVCMYIFAFCFPILIIFFCYFNIV. Residues 225–261 lie on the Cytoplasmic side of the membrane; the sequence is MAVSNHEKEMAAMAKRLNAKELRKAQAGASAEMKLAK. A helical transmembrane segment spans residues 262 to 283; it reads ISIVIVTQFLLSWSPYAVVALL. Over 284–293 the chain is Extracellular; sequence AQFGPIEWVT. A helical membrane pass occupies residues 294–315; sequence PYAAQLPVMFAKASAIHNPLIY. Lys-305 carries the N6-(retinylidene)lysine modification. Over 316–464 the chain is Cytoplasmic; sequence SVSHPKFREA…QGVDNQAYQA (149 aa). Residues Cys-336 and Cys-337 are each lipidated (S-palmitoyl cysteine). Residues 344–464 are disordered; it reads VEDDKDAETE…QGVDNQAYQA (121 aa). The segment covering 367–401 has biased composition (low complexity); the sequence is AAQMKEMMAMMQKMQQQQAAYPPQGAYPPQGGYPP. 2 stretches are compositionally biased toward pro residues: residues 416-425 and 434-452; these read QGYPPPPQGY and QGYP…PQAA.

Belongs to the G-protein coupled receptor 1 family. Opsin subfamily. Post-translationally, contains one covalently linked retinal chromophore. Upon light absorption, the covalently bound 11-cis-retinal is converted to all-trans-retinal. After hydrolysis of the Schiff base and release of the covalently bound all-trans-retinal, active rhodopsin is regenerated by binding of a fresh molecule of 11-cis-retinal.

It localises to the cell projection. It is found in the rhabdomere membrane. Its function is as follows. Photoreceptor required for image-forming vision at low light intensity. Light-induced isomerization of 11-cis to all-trans retinal triggers a conformational change that activates signaling via G-proteins. Signaling mediates the activation of phospholipase C. Subsequent receptor phosphorylation mediates displacement of the bound G-protein alpha subunit by arrestin and terminates signaling. This Sepia officinalis (Common cuttlefish) protein is Rhodopsin (RHO).